We begin with the raw amino-acid sequence, 289 residues long: 4-hydroxy-tetrahydrodipicolinate synthase (289 aa).

A pyruvate-binding site is contributed by threonine 44. Tyrosine 132 functions as the Proton donor/acceptor in the catalytic mechanism. The active-site Schiff-base intermediate with substrate is the lysine 161. Pyruvate is bound at residue isoleucine 201.

It belongs to the DapA family. In terms of assembly, homotetramer; dimer of dimers.

Its subcellular location is the cytoplasm. It catalyses the reaction L-aspartate 4-semialdehyde + pyruvate = (2S,4S)-4-hydroxy-2,3,4,5-tetrahydrodipicolinate + H2O + H(+). The protein operates within amino-acid biosynthesis; L-lysine biosynthesis via DAP pathway; (S)-tetrahydrodipicolinate from L-aspartate: step 3/4. Its function is as follows. Catalyzes the condensation of (S)-aspartate-beta-semialdehyde [(S)-ASA] and pyruvate to 4-hydroxy-tetrahydrodipicolinate (HTPA). The protein is 4-hydroxy-tetrahydrodipicolinate synthase of Methanocaldococcus jannaschii (strain ATCC 43067 / DSM 2661 / JAL-1 / JCM 10045 / NBRC 100440) (Methanococcus jannaschii).